A 178-amino-acid polypeptide reads, in one-letter code: Adenine phosphoribosyltransferase (178 aa).

This sequence belongs to the purine/pyrimidine phosphoribosyltransferase family. As to quaternary structure, homodimer.

Its subcellular location is the cytoplasm. It catalyses the reaction AMP + diphosphate = 5-phospho-alpha-D-ribose 1-diphosphate + adenine. It participates in purine metabolism; AMP biosynthesis via salvage pathway; AMP from adenine: step 1/1. Its function is as follows. Catalyzes a salvage reaction resulting in the formation of AMP, that is energically less costly than de novo synthesis. This is Adenine phosphoribosyltransferase from Cereibacter sphaeroides (strain ATCC 17025 / ATH 2.4.3) (Rhodobacter sphaeroides).